A 216-amino-acid chain; its full sequence is Protein YabP (216 aa).

This chain is Protein YabP (yabP), found in Escherichia coli (strain K12).